The sequence spans 68 residues: Beta-defensin 1 (68 aa).

The N-terminal stretch at M1–G21 is a signal peptide. Positions D22–S32 are excised as a propeptide. 3 disulfide bridges follow: C37-C66, C44-C59, and C49-C67.

It belongs to the beta-defensin family. In terms of assembly, monomer. Homodimer.

It is found in the secreted. Its subcellular location is the membrane. Its function is as follows. Has bactericidal activity. May act as a ligand for C-C chemokine receptor CCR6. Positively regulates the sperm motility and bactericidal activity in a CCR6-dependent manner. Binds to CCR6 and triggers Ca2+ mobilization in the sperm which is important for its motility. The chain is Beta-defensin 1 (DEFB1) from Presbytis melalophos (Mitred leaf monkey).